The primary structure comprises 20 residues: Non-secretory ribonuclease (20 aa).

The active-site Proton acceptor is the His-16.

It belongs to the pancreatic ribonuclease family. In terms of assembly, interacts with and forms a tight 1:1 complex with RNH1. Dimerization of two such complexes may occur.

Its subcellular location is the lysosome. It is found in the cytoplasmic granule. It carries out the reaction an [RNA] containing cytidine + H2O = an [RNA]-3'-cytidine-3'-phosphate + a 5'-hydroxy-ribonucleotide-3'-[RNA].. The catalysed reaction is an [RNA] containing uridine + H2O = an [RNA]-3'-uridine-3'-phosphate + a 5'-hydroxy-ribonucleotide-3'-[RNA].. In terms of biological role, this is a non-secretory ribonuclease. It is a pyrimidine specific nuclease with a slight preference for U. Cytotoxin and helminthotoxin. Possesses a wide variety of biological activities. The chain is Non-secretory ribonuclease (RNASE2) from Sus scrofa (Pig).